The chain runs to 335 residues: MRISILGAGAWGTALAIALAERHDVVLWGRSEDAMAQRARSXENTAYLPGHPLPAALKATADFSLALDHVAQGDGLLIAATSVAGLRPLAQQLQGKAIPNLVWLCKGLEEGSGLLPHQVVREVLGTQLPAGVLSGPSFAQEVAQGLPCALVIAAEDAALRELVVAAVHGPAIRVYSSDDVVGVEVGGAVKNILAIATGILDGMSLGLNARAALITRGLAEITRLGIALGARAETFMGLAGVGDLILTCTGDLSRNRKVGLGLAQGKPLETIVTELGHVAEGVRCAAAVRNLAQQLQIEMPITNAVAGILFDGHSPRATVEQLLARHPRDESISAS.

NADPH contacts are provided by Trp-11, Arg-30, and Lys-106. Sn-glycerol 3-phosphate contacts are provided by Lys-106, Gly-135, and Ser-137. Residue Ala-139 participates in NADPH binding. The sn-glycerol 3-phosphate site is built by Lys-190, Asp-243, Ser-253, Arg-254, and Asn-255. Lys-190 (proton acceptor) is an active-site residue. Arg-254 serves as a coordination point for NADPH. Val-278 and Glu-280 together coordinate NADPH.

This sequence belongs to the NAD-dependent glycerol-3-phosphate dehydrogenase family.

The protein resides in the cytoplasm. The catalysed reaction is sn-glycerol 3-phosphate + NAD(+) = dihydroxyacetone phosphate + NADH + H(+). It catalyses the reaction sn-glycerol 3-phosphate + NADP(+) = dihydroxyacetone phosphate + NADPH + H(+). Its pathway is membrane lipid metabolism; glycerophospholipid metabolism. Catalyzes the reduction of the glycolytic intermediate dihydroxyacetone phosphate (DHAP) to sn-glycerol 3-phosphate (G3P), the key precursor for phospholipid synthesis. This Paucimonas lemoignei (Pseudomonas lemoignei) protein is Glycerol-3-phosphate dehydrogenase [NAD(P)+].